The following is a 385-amino-acid chain: Methylthioribose-1-phosphate isomerase (385 aa).

The active-site Proton donor is Asp256.

Belongs to the eIF-2B alpha/beta/delta subunits family. MtnA subfamily.

The protein localises to the cytoplasm. It is found in the nucleus. It catalyses the reaction 5-(methylsulfanyl)-alpha-D-ribose 1-phosphate = 5-(methylsulfanyl)-D-ribulose 1-phosphate. It participates in amino-acid biosynthesis; L-methionine biosynthesis via salvage pathway; L-methionine from S-methyl-5-thio-alpha-D-ribose 1-phosphate: step 1/6. Catalyzes the interconversion of methylthioribose-1-phosphate (MTR-1-P) into methylthioribulose-1-phosphate (MTRu-1-P). This is Methylthioribose-1-phosphate isomerase from Arthroderma otae (strain ATCC MYA-4605 / CBS 113480) (Microsporum canis).